A 200-amino-acid chain; its full sequence is Adenylate kinase (200 aa).

11–16 (GAGKGT) contributes to the ATP binding site. The NMP stretch occupies residues 31–60 (STGDIFRQNIKDRTELGQQVQALVDAGNYV). Residues threonine 32, arginine 37, 58–60 (NYV), 86–89 (GYPR), and glutamine 93 each bind AMP. An LID region spans residues 127–137 (RRAAEQGRADD). Arginine 128 is a binding site for ATP. AMP-binding residues include arginine 134 and arginine 145. Residue glycine 173 participates in ATP binding.

This sequence belongs to the adenylate kinase family. As to quaternary structure, monomer.

The protein resides in the cytoplasm. The enzyme catalyses AMP + ATP = 2 ADP. The protein operates within purine metabolism; AMP biosynthesis via salvage pathway; AMP from ADP: step 1/1. Catalyzes the reversible transfer of the terminal phosphate group between ATP and AMP. Plays an important role in cellular energy homeostasis and in adenine nucleotide metabolism. This chain is Adenylate kinase, found in Clavibacter michiganensis subsp. michiganensis (strain NCPPB 382).